We begin with the raw amino-acid sequence, 466 residues long: tRNA-2-methylthio-N(6)-dimethylallyladenosine synthase (466 aa).

Residues 21 to 137 (GSYWITTFGC…LEDLLNQVDN (117 aa)) enclose the MTTase N-terminal domain. Residues Cys30, Cys66, Cys100, Cys172, Cys176, and Cys179 each coordinate [4Fe-4S] cluster. Residues 158–395 (RDSNICAWVN…NLLVEQTAKD (238 aa)) form the Radical SAM core domain. One can recognise a TRAM domain in the interval 398 to 466 (TRYHNQIVEV…AFSLTGSPIQ (69 aa)).

Belongs to the methylthiotransferase family. MiaB subfamily. Monomer. Requires [4Fe-4S] cluster as cofactor.

It localises to the cytoplasm. The catalysed reaction is N(6)-dimethylallyladenosine(37) in tRNA + (sulfur carrier)-SH + AH2 + 2 S-adenosyl-L-methionine = 2-methylsulfanyl-N(6)-dimethylallyladenosine(37) in tRNA + (sulfur carrier)-H + 5'-deoxyadenosine + L-methionine + A + S-adenosyl-L-homocysteine + 2 H(+). Its function is as follows. Catalyzes the methylthiolation of N6-(dimethylallyl)adenosine (i(6)A), leading to the formation of 2-methylthio-N6-(dimethylallyl)adenosine (ms(2)i(6)A) at position 37 in tRNAs that read codons beginning with uridine. The polypeptide is tRNA-2-methylthio-N(6)-dimethylallyladenosine synthase (Prochlorococcus marinus (strain SARG / CCMP1375 / SS120)).